We begin with the raw amino-acid sequence, 1361 residues long: Zinc finger protein GLI4 (1361 aa).

Residues 185 to 270 form a disordered region; the sequence is SSFGHTPLLH…PQPPDHLTDL (86 aa). Composition is skewed to polar residues over residues 198-208 and 227-241; these read TFASRQQGALT and NKVS…TVNQ. 5 C2H2-type zinc fingers span residues 289-314, 322-349, 355-379, 385-410, and 416-441; these read TNCH…NNDH, FVCR…MRRH, HKCT…LRSH, YVCD…NRTH, and YICK…KTVH. 6 disordered regions span residues 434-527, 556-584, 647-720, 787-832, 906-946, and 1134-1230; these read RKHV…TNNI, STVS…GTAE, NERR…LPNL, NAGL…SMNS, QNRE…APGA, and DGLH…PKDN. Residues 475–502 show a composition bias toward basic and acidic residues; that stretch reads SGREHSDSVSRDQEHCLQTRTIKTEDNM. The span at 506-522 shows a compositional bias: low complexity; sequence SSPGGQSSCSSEPSPYG. Residues 573 to 584 are compositionally biased toward basic and acidic residues; it reads QRIHSAETGTAE. Over residues 653-670 the composition is skewed to low complexity; the sequence is TSSTLSSAYTSRRSSGIS. 2 stretches are compositionally biased toward polar residues: residues 672-695 and 710-720; these read YFSS…SSAD and EASQHSGLPNL. Residues 805-821 are compositionally biased toward basic and acidic residues; the sequence is RASDPVRRTAGIDDKPL. Polar residues-rich tracts occupy residues 913 to 939 and 1142 to 1164; these read QNLQ…NTPE and YTVQ…SGQA. Positions 1172-1183 are enriched in pro residues; it reads PRPPAAPHPPNR.

It belongs to the GLI C2H2-type zinc-finger protein family.

The protein resides in the nucleus. Its function is as follows. Has an essential role in the early embryonic patterning of mesoderm and neuroectoderm. In Xenopus laevis (African clawed frog), this protein is Zinc finger protein GLI4 (gli4).